A 102-amino-acid chain; its full sequence is Putative pterin-4-alpha-carbinolamine dehydratase (102 aa).

It belongs to the pterin-4-alpha-carbinolamine dehydratase family.

It carries out the reaction (4aS,6R)-4a-hydroxy-L-erythro-5,6,7,8-tetrahydrobiopterin = (6R)-L-erythro-6,7-dihydrobiopterin + H2O. In Burkholderia orbicola (strain MC0-3), this protein is Putative pterin-4-alpha-carbinolamine dehydratase.